Reading from the N-terminus, the 315-residue chain is GPN-loop GTPase 2 (315 aa).

GTP is bound at residue 12–17; sequence GSGKST. Residues 69–71 carry the Gly-Pro-Asn (GPN)-loop; involved in dimer interface motif; the sequence is GPN. Position 172–175 (172–175) interacts with GTP; sequence SKAD.

The protein belongs to the GPN-loop GTPase family. As to quaternary structure, heterodimers with gpn1 or fet5/gpn3. Binds to RNA polymerase II (RNAPII).

It localises to the cytoplasm. The protein localises to the nucleus. Its function is as follows. Small GTPase required for proper nuclear import of RNA polymerase II and III (RNAPII and RNAPIII). May act at an RNAP assembly step prior to nuclear import. In Schizosaccharomyces pombe (strain 972 / ATCC 24843) (Fission yeast), this protein is GPN-loop GTPase 2.